Here is a 136-residue protein sequence, read N- to C-terminus: Large ribosomal subunit protein uL16 (136 aa).

It belongs to the universal ribosomal protein uL16 family. In terms of assembly, part of the 50S ribosomal subunit.

Its function is as follows. Binds 23S rRNA and is also seen to make contacts with the A and possibly P site tRNAs. The polypeptide is Large ribosomal subunit protein uL16 (Alteromonas mediterranea (strain DSM 17117 / CIP 110805 / LMG 28347 / Deep ecotype)).